A 158-amino-acid polypeptide reads, in one-letter code: Transcription elongation factor GreA (158 aa).

It belongs to the GreA/GreB family.

Functionally, necessary for efficient RNA polymerase transcription elongation past template-encoded arresting sites. The arresting sites in DNA have the property of trapping a certain fraction of elongating RNA polymerases that pass through, resulting in locked ternary complexes. Cleavage of the nascent transcript by cleavage factors such as GreA or GreB allows the resumption of elongation from the new 3'terminus. GreA releases sequences of 2 to 3 nucleotides. The sequence is that of Transcription elongation factor GreA from Agrobacterium fabrum (strain C58 / ATCC 33970) (Agrobacterium tumefaciens (strain C58)).